The sequence spans 339 residues: MADPRFFRVAGPFTLAQLAELSGASVAEGCDLGASFVDVAPLEQAGQDNVSFLDNRKYVGAFQASKAGLCVIAPEMADKAPEGMALLLSPDPYRAYARIAQAFYPNPAPEPWVAPTAWVDASAAVGEGCRIEPGAVIGAGARIGARCRIGANVVIGQGVVLGDDCTIGANATVSHALVGSRVNIYPGARIGQDGFGFAMGPQGHLKVPQLGRVLIGNNVEIGANTTIDRGAGPDTVIGDGSMIDNLVQIGHNVQLGRGCVIVAQVGISGSTRMGDFVAAGGQAGITGHLKIGAGAKIAAQAGVMRDIAPGETVGGAPAVPMADWLRQSAILGKMARKKS.

His-251 functions as the Proton acceptor in the catalytic mechanism.

The protein belongs to the transferase hexapeptide repeat family. LpxD subfamily. Homotrimer.

It catalyses the reaction a UDP-3-O-[(3R)-3-hydroxyacyl]-alpha-D-glucosamine + a (3R)-hydroxyacyl-[ACP] = a UDP-2-N,3-O-bis[(3R)-3-hydroxyacyl]-alpha-D-glucosamine + holo-[ACP] + H(+). Its pathway is bacterial outer membrane biogenesis; LPS lipid A biosynthesis. Functionally, catalyzes the N-acylation of UDP-3-O-acylglucosamine using 3-hydroxyacyl-ACP as the acyl donor. Is involved in the biosynthesis of lipid A, a phosphorylated glycolipid that anchors the lipopolysaccharide to the outer membrane of the cell. This is UDP-3-O-acylglucosamine N-acyltransferase from Paramagnetospirillum magneticum (strain ATCC 700264 / AMB-1) (Magnetospirillum magneticum).